Here is a 569-residue protein sequence, read N- to C-terminus: Arginine--tRNA ligase (569 aa).

The 'HIGH' region motif lies at 123 to 133 (PNIAKRMHIGH).

The protein belongs to the class-I aminoacyl-tRNA synthetase family. As to quaternary structure, monomer.

It is found in the cytoplasm. It catalyses the reaction tRNA(Arg) + L-arginine + ATP = L-arginyl-tRNA(Arg) + AMP + diphosphate. This chain is Arginine--tRNA ligase, found in Fusobacterium nucleatum subsp. nucleatum (strain ATCC 25586 / DSM 15643 / BCRC 10681 / CIP 101130 / JCM 8532 / KCTC 2640 / LMG 13131 / VPI 4355).